The chain runs to 318 residues: Small ribosomal subunit protein RACK1 (318 aa).

WD repeat units follow at residues 11–44, 65–95, 107–137, 150–182, 194–224, 235–264, and 282–315; these read GHRG…LSWG, GHSA…RLWN, GHTK…RVWN, AHTD…KVWD, GHTN…RLWD, AAGA…RIFD, and KKIV…WGVS.

The protein belongs to the WD repeat G protein beta family. Ribosomal protein RACK1 subfamily.

The chain is Small ribosomal subunit protein RACK1 from Trypanosoma brucei brucei.